A 351-amino-acid chain; its full sequence is S-adenosylmethionine:tRNA ribosyltransferase-isomerase (351 aa).

It belongs to the QueA family. In terms of assembly, monomer.

The protein localises to the cytoplasm. The catalysed reaction is 7-aminomethyl-7-carbaguanosine(34) in tRNA + S-adenosyl-L-methionine = epoxyqueuosine(34) in tRNA + adenine + L-methionine + 2 H(+). Its pathway is tRNA modification; tRNA-queuosine biosynthesis. Transfers and isomerizes the ribose moiety from AdoMet to the 7-aminomethyl group of 7-deazaguanine (preQ1-tRNA) to give epoxyqueuosine (oQ-tRNA). This is S-adenosylmethionine:tRNA ribosyltransferase-isomerase from Hydrogenovibrio crunogenus (strain DSM 25203 / XCL-2) (Thiomicrospira crunogena).